Reading from the N-terminus, the 499-residue chain is Chaperone SurA (499 aa).

Residues 1–36 (MKRQEFALFSLTLMLSPWRRVLLPAVLAAMAGPALA) form the signal peptide. PpiC domains lie at 231–333 (PTEF…KLTA) and 352–450 (ITQT…QVEN).

The protein localises to the periplasm. The catalysed reaction is [protein]-peptidylproline (omega=180) = [protein]-peptidylproline (omega=0). Functionally, chaperone involved in the correct folding and assembly of outer membrane proteins. Recognizes specific patterns of aromatic residues and the orientation of their side chains, which are found more frequently in integral outer membrane proteins. May act in both early periplasmic and late outer membrane-associated steps of protein maturation. The chain is Chaperone SurA from Cupriavidus pinatubonensis (strain JMP 134 / LMG 1197) (Cupriavidus necator (strain JMP 134)).